Reading from the N-terminus, the 347-residue chain is Quinolinate synthase (347 aa).

The iminosuccinate site is built by histidine 47 and serine 68. Cysteine 113 lines the [4Fe-4S] cluster pocket. Residues 139 to 141 (YAN) and serine 156 each bind iminosuccinate. Residue cysteine 200 participates in [4Fe-4S] cluster binding. Iminosuccinate is bound by residues 226–228 (HPE) and threonine 243. Cysteine 297 provides a ligand contact to [4Fe-4S] cluster.

The protein belongs to the quinolinate synthase family. Type 1 subfamily. Requires [4Fe-4S] cluster as cofactor.

The protein resides in the cytoplasm. It catalyses the reaction iminosuccinate + dihydroxyacetone phosphate = quinolinate + phosphate + 2 H2O + H(+). Its pathway is cofactor biosynthesis; NAD(+) biosynthesis; quinolinate from iminoaspartate: step 1/1. Functionally, catalyzes the condensation of iminoaspartate with dihydroxyacetone phosphate to form quinolinate. The protein is Quinolinate synthase of Salmonella gallinarum (strain 287/91 / NCTC 13346).